The sequence spans 337 residues: Exopolysaccharide phosphotransferase cps2G (337 aa).

It belongs to the stealth family.

The chain is Exopolysaccharide phosphotransferase cps2G (cps2G) from Lactiplantibacillus plantarum (strain ATCC BAA-793 / NCIMB 8826 / WCFS1) (Lactobacillus plantarum).